We begin with the raw amino-acid sequence, 639 residues long: Threonine--tRNA ligase (639 aa).

Residues 1 to 62 (MYQLTLPDKS…ETDANIEVLT (62 aa)) form the TGS domain. A catalytic region spans residues 246–537 (DHRKIGKELD…LIEHYEGKFP (292 aa)). 3 residues coordinate Zn(2+): Cys337, His388, and His514.

Belongs to the class-II aminoacyl-tRNA synthetase family. In terms of assembly, homodimer. It depends on Zn(2+) as a cofactor.

It localises to the cytoplasm. It carries out the reaction tRNA(Thr) + L-threonine + ATP = L-threonyl-tRNA(Thr) + AMP + diphosphate + H(+). Catalyzes the attachment of threonine to tRNA(Thr) in a two-step reaction: L-threonine is first activated by ATP to form Thr-AMP and then transferred to the acceptor end of tRNA(Thr). Also edits incorrectly charged L-seryl-tRNA(Thr). The polypeptide is Threonine--tRNA ligase (Leptospira borgpetersenii serovar Hardjo-bovis (strain JB197)).